Here is a 396-residue protein sequence, read N- to C-terminus: Probable porphobilinogen deaminase (396 aa).

The disordered stretch occupies residues 159 to 224 (APALHREHER…DTASSSEFEQ (66 aa)). Residues 159 to 245 (APALHREHER…LQQSAMERDP (87 aa)) are insert. Basic and acidic residues predominate over residues 162–189 (LHREHERRTEAEKEAQSRDAREQRRGDY). The segment covering 200 to 215 (LDTEDGEEGAADDGDD) has biased composition (acidic residues). Position 328 is an S-(dipyrrolylmethanemethyl)cysteine (C328).

The protein belongs to the HMBS family. The cofactor is dipyrromethane.

The catalysed reaction is 4 porphobilinogen + H2O = hydroxymethylbilane + 4 NH4(+). It functions in the pathway porphyrin-containing compound metabolism; protoporphyrin-IX biosynthesis; coproporphyrinogen-III from 5-aminolevulinate: step 2/4. Tetrapolymerization of the monopyrrole PBG into the hydroxymethylbilane pre-uroporphyrinogen in several discrete steps. This is Probable porphobilinogen deaminase (hemC) from Halobacterium salinarum (strain ATCC 700922 / JCM 11081 / NRC-1) (Halobacterium halobium).